We begin with the raw amino-acid sequence, 208 residues long: Small ribosomal subunit protein uS2 (208 aa).

The tract at residues 189-208 is disordered; sequence KPDQDLPVPPEEFETRLVQT.

The protein belongs to the universal ribosomal protein uS2 family.

In Pyrobaculum arsenaticum (strain DSM 13514 / JCM 11321 / PZ6), this protein is Small ribosomal subunit protein uS2.